The chain runs to 139 residues: Sec-independent protein translocase protein TatB (139 aa).

The chain crosses the membrane as a helical span at residues 1-21; that stretch reads MFDIGFTELLLVGLVALMVLG. Residues 69-139 form a disordered region; that stretch reads LDLEREMKQS…PLRSDRPSEP (71 aa). Positions 80–95 are enriched in pro residues; the sequence is MPPPASNPAATPPSPP.

Belongs to the TatB family. As to quaternary structure, the Tat system comprises two distinct complexes: a TatABC complex, containing multiple copies of TatA, TatB and TatC subunits, and a separate TatA complex, containing only TatA subunits. Substrates initially bind to the TatABC complex, which probably triggers association of the separate TatA complex to form the active translocon.

It is found in the cell inner membrane. Part of the twin-arginine translocation (Tat) system that transports large folded proteins containing a characteristic twin-arginine motif in their signal peptide across membranes. Together with TatC, TatB is part of a receptor directly interacting with Tat signal peptides. TatB may form an oligomeric binding site that transiently accommodates folded Tat precursor proteins before their translocation. This is Sec-independent protein translocase protein TatB from Stutzerimonas stutzeri (strain A1501) (Pseudomonas stutzeri).